A 118-amino-acid chain; its full sequence is Holo-[acyl-carrier-protein] synthase (118 aa).

Positions 5 and 50 each coordinate Mg(2+).

It belongs to the P-Pant transferase superfamily. AcpS family. The cofactor is Mg(2+).

It localises to the cytoplasm. The catalysed reaction is apo-[ACP] + CoA = holo-[ACP] + adenosine 3',5'-bisphosphate + H(+). Transfers the 4'-phosphopantetheine moiety from coenzyme A to a Ser of acyl-carrier-protein. The sequence is that of Holo-[acyl-carrier-protein] synthase from Aliarcobacter butzleri (strain RM4018) (Arcobacter butzleri).